Consider the following 435-residue polypeptide: Trigger factor (435 aa).

The 86-residue stretch at 163 to 248 folds into the PPIase FKBP-type domain; that stretch reads DDITLIDFTG…INEIKRKELA (86 aa).

This sequence belongs to the FKBP-type PPIase family. Tig subfamily.

The protein localises to the cytoplasm. The catalysed reaction is [protein]-peptidylproline (omega=180) = [protein]-peptidylproline (omega=0). Involved in protein export. Acts as a chaperone by maintaining the newly synthesized protein in an open conformation. Functions as a peptidyl-prolyl cis-trans isomerase. The sequence is that of Trigger factor from Desulforamulus reducens (strain ATCC BAA-1160 / DSM 100696 / MI-1) (Desulfotomaculum reducens).